The primary structure comprises 170 residues: 4-hydroxyphenylacetate 3-monooxygenase reductase component (170 aa).

The protein belongs to the non-flavoprotein flavin reductase family. HpaC subfamily. As to quaternary structure, homodimer. 4-HPA 3-monooxygenase consists of a reductase component HpaC and an oxygenase component HpaB.

It catalyses the reaction a reduced flavin + NAD(+) = an oxidized flavin + NADH + 2 H(+). The protein operates within aromatic compound metabolism; 4-hydroxyphenylacetate degradation; pyruvate and succinate semialdehyde from 4-hydroxyphenylacetate: step 1/7. Its function is as follows. Catalyzes the reduction of free flavins (FMN, FAD and riboflavin) by NADH. Subsequently, the reduced flavins diffuse to the large HpaB component or to other electron acceptors such as cytochrome c and Fe(3+) ion. This is 4-hydroxyphenylacetate 3-monooxygenase reductase component (hpaC) from Salmonella typhimurium (strain LT2 / SGSC1412 / ATCC 700720).